We begin with the raw amino-acid sequence, 273 residues long: Orotidine 5'-phosphate decarboxylase (273 aa).

The Proton donor role is filled by Lys-96.

Belongs to the OMP decarboxylase family. Type 2 subfamily.

The catalysed reaction is orotidine 5'-phosphate + H(+) = UMP + CO2. It functions in the pathway pyrimidine metabolism; UMP biosynthesis via de novo pathway; UMP from orotate: step 2/2. The sequence is that of Orotidine 5'-phosphate decarboxylase from Nocardioides sp. (strain ATCC BAA-499 / JS614).